Consider the following 294-residue polypeptide: NAD kinase (294 aa).

Asp74 serves as the catalytic Proton acceptor. NAD(+) is bound by residues 74–75 (DG), 148–149 (NE), His159, Arg176, Asp178, 189–194 (TAYSLS), and Gln249.

The protein belongs to the NAD kinase family. A divalent metal cation is required as a cofactor.

It localises to the cytoplasm. The catalysed reaction is NAD(+) + ATP = ADP + NADP(+) + H(+). In terms of biological role, involved in the regulation of the intracellular balance of NAD and NADP, and is a key enzyme in the biosynthesis of NADP. Catalyzes specifically the phosphorylation on 2'-hydroxyl of the adenosine moiety of NAD to yield NADP. The protein is NAD kinase of Vibrio parahaemolyticus serotype O3:K6 (strain RIMD 2210633).